The following is a 427-amino-acid chain: Probable transcription factor At5g28040 (427 aa).

Residues 1–81 form a disordered region; the sequence is MASDQRDTDF…APATKSSSGT (81 aa). S14 bears the Phosphoserine mark. Residues 22–32 are compositionally biased toward gly residues; that stretch reads GGGGGGRGGGE. Positions 33–62 are enriched in acidic residues; sequence TESDEDVVIPEPNEAEDDDHDPDPDPEYED.

Belongs to the GeBP family.

This chain is Probable transcription factor At5g28040, found in Arabidopsis thaliana (Mouse-ear cress).